An 808-amino-acid chain; its full sequence is Probable ATP-dependent helicase MJ1401 (808 aa).

The Q motif motif lies at 189–217; the sequence is YKIDELDIPEELKEIIKSRGIEELLPVQT. Residues 221 to 391 enclose the Helicase ATP-binding domain; the sequence is KAGLLNGDDL…QLNAKLVLYN (171 aa). 234–241 is a binding site for ATP; sequence SATSSGKT. The DEIH box signature appears at 336–339; sequence DEIH. The 190-residue stretch at 396 to 585 folds into the Helicase C-terminal domain; sequence PLERHIIFCK…EDEEEEQILA (190 aa).

The protein belongs to the DEAD box helicase family.

The sequence is that of Probable ATP-dependent helicase MJ1401 from Methanocaldococcus jannaschii (strain ATCC 43067 / DSM 2661 / JAL-1 / JCM 10045 / NBRC 100440) (Methanococcus jannaschii).